The chain runs to 334 residues: S-adenosylmethionine:tRNA ribosyltransferase-isomerase (334 aa).

This sequence belongs to the QueA family. In terms of assembly, monomer.

It localises to the cytoplasm. It catalyses the reaction 7-aminomethyl-7-carbaguanosine(34) in tRNA + S-adenosyl-L-methionine = epoxyqueuosine(34) in tRNA + adenine + L-methionine + 2 H(+). Its pathway is tRNA modification; tRNA-queuosine biosynthesis. In terms of biological role, transfers and isomerizes the ribose moiety from AdoMet to the 7-aminomethyl group of 7-deazaguanine (preQ1-tRNA) to give epoxyqueuosine (oQ-tRNA). This is S-adenosylmethionine:tRNA ribosyltransferase-isomerase from Rubrobacter xylanophilus (strain DSM 9941 / JCM 11954 / NBRC 16129 / PRD-1).